Consider the following 103-residue polypeptide: Histone H4 (103 aa).

Lys-6 is modified (N6-acetyl-N6-methyllysine; alternate). Lys-6, Lys-9, and Lys-13 each carry N6-methyllysine; alternate. At Lys-13 the chain carries N6-acetyl-N6-methyllysine; alternate. The DNA-binding element occupies 17-21 (KRHRK). The residue at position 92 (Lys-92) is an N6-glutaryllysine.

Belongs to the histone H4 family. As to quaternary structure, the nucleosome is a histone octamer containing two molecules each of H2A, H2B, H3 and H4 assembled in one H3-H4 heterotetramer and two H2A-H2B heterodimers. The octamer wraps approximately 147 bp of DNA. Post-translationally, glutarylation at Lys-92 (H4K91glu) destabilizes nucleosomes by promoting dissociation of the H2A-H2B dimers from nucleosomes.

The protein resides in the nucleus. It localises to the chromosome. Functionally, core component of nucleosome. Nucleosomes wrap and compact DNA into chromatin, limiting DNA accessibility to the cellular machineries which require DNA as a template. Histones thereby play a central role in transcription regulation, DNA repair, DNA replication and chromosomal stability. DNA accessibility is regulated via a complex set of post-translational modifications of histones, also called histone code, and nucleosome remodeling. The polypeptide is Histone H4 (H4.1) (Mortierella alpina (Oleaginous fungus)).